The sequence spans 423 residues: MKIKILSTGDEIVSGGVVDTNASWLAASLLGLGLTVDCFVAVGDDFGTLRRTIADLAAETDILIVTGGLGPTNDDITAEAAAGAVNTKTILNPEALGLVTDYFNRKGWPMNPSNKKQAVLPRDCRVIENEVGTAPGFYLRISGCHGFFMPGVPKEMKAMTLNWVLPWIQRYAAKNLGRTLTDITPRTITVFGLPESEVGARLKDLATQFPGVRPGFRADFPLIQVKLYPDSEKRGGGENILDQAEQFVVTTLGRWVISREGLTMEQEVGRLLVQKKATIALAESCTGGLMASMLTDVPGSSEYFIFSGVTYSNEAKIRVLGVRQSTLESHGAVSEETAGEMAQGVRRLTQATYGISTSGVAGPGGGSPEKPVGMVCIGIAGPGFCTTKRYGFAFNDRTMNKQIFAVTALGALRKRMLMQGGSV.

The protein belongs to the CinA family.

The chain is CinA-like protein from Desulforapulum autotrophicum (strain ATCC 43914 / DSM 3382 / VKM B-1955 / HRM2) (Desulfobacterium autotrophicum).